The chain runs to 170 residues: Transcription factor E (170 aa).

The HTH TFE/IIEalpha-type domain occupies M1–R93.

Belongs to the TFE family. Monomer. Interaction with RNA polymerase subunits RpoF and RpoE is necessary for Tfe stimulatory transcription activity. Able to interact with Tbp and RNA polymerase in the absence of DNA promoter. Interacts both with the preinitiation and elongation complexes.

In terms of biological role, transcription factor that plays a role in the activation of archaeal genes transcribed by RNA polymerase. Facilitates transcription initiation by enhancing TATA-box recognition by TATA-box-binding protein (Tbp), and transcription factor B (Tfb) and RNA polymerase recruitment. Not absolutely required for transcription in vitro, but particularly important in cases where Tbp or Tfb function is not optimal. It dynamically alters the nucleic acid-binding properties of RNA polymerases by stabilizing the initiation complex and destabilizing elongation complexes. Seems to translocate with the RNA polymerase following initiation and acts by binding to the non template strand of the transcription bubble in elongation complexes. The protein is Transcription factor E of Pyrobaculum arsenaticum (strain DSM 13514 / JCM 11321 / PZ6).